A 320-amino-acid polypeptide reads, in one-letter code: Methylenetetrahydrofolate dehydrogenase [NAD(+)] (320 aa).

Residue Cys152 is part of the active site. NAD(+)-binding positions include 187-188 (RS) and 210-211 (DI).

It belongs to the tetrahydrofolate dehydrogenase/cyclohydrolase family. In terms of assembly, homodimer.

Its subcellular location is the cytoplasm. The protein localises to the nucleus. The enzyme catalyses (6R)-5,10-methylene-5,6,7,8-tetrahydrofolate + NAD(+) = (6R)-5,10-methenyltetrahydrofolate + NADH. It functions in the pathway one-carbon metabolism; tetrahydrofolate interconversion. Functionally, catalyzes oxidation of cytoplasmic one-carbon units for purine biosynthesis. The polypeptide is Methylenetetrahydrofolate dehydrogenase [NAD(+)] (mtd1) (Schizosaccharomyces pombe (strain 972 / ATCC 24843) (Fission yeast)).